The chain runs to 278 residues: MRIQFSKMHGLGNDFVVIDAIHQPVDLSPDQVRLLAHRRFGVGCDQVLLVERPSDPAAADFRYRIFNADGNEVEQCGNGARCFAVFVRERGLTAKDHIPVETAAGIIHLQVQPDGQVTVDMGPPRLKPWQIPFEAESAMTSYPLEVEGETYEIGAVSMGNPHAVLRVDNVQTAPVARLGPLIEAHPRFPRHVNVGFMQVVSPGEIRLRVYERGVGETLACGTGACAAVVSGRIQGLLDETVAVDLPGGRLVINWAGQEEAPVMMTGPATQVFTGSIDI.

Substrate contacts are provided by Asn-13, Gln-46, and Asn-67. The Proton donor role is filled by Cys-76. Residues 77 to 78 (GN), Asn-160, Asn-193, and 211 to 212 (ER) each bind substrate. The active-site Proton acceptor is Cys-220. 221–222 (GT) lines the substrate pocket.

This sequence belongs to the diaminopimelate epimerase family. Homodimer.

Its subcellular location is the cytoplasm. The enzyme catalyses (2S,6S)-2,6-diaminopimelate = meso-2,6-diaminopimelate. Its pathway is amino-acid biosynthesis; L-lysine biosynthesis via DAP pathway; DL-2,6-diaminopimelate from LL-2,6-diaminopimelate: step 1/1. In terms of biological role, catalyzes the stereoinversion of LL-2,6-diaminopimelate (L,L-DAP) to meso-diaminopimelate (meso-DAP), a precursor of L-lysine and an essential component of the bacterial peptidoglycan. The protein is Diaminopimelate epimerase of Thioalkalivibrio sulfidiphilus (strain HL-EbGR7).